Reading from the N-terminus, the 276-residue chain is Chymotrypsin (276 aa).

A signal peptide spans 1 to 16 (MKVALVVLALFGVSLA). Residues 17-45 (ASIDNIEIPPSKNIYVEPINQPEVDPSLE) constitute a propeptide, activation peptide. One can recognise a Peptidase S1 domain in the interval 46–272 (IVNGQEVVPH…YLNWLQTHSE (227 aa)). The cysteines at positions 74 and 90 are disulfide-linked. Catalysis depends on charge relay system residues His-89 and Asp-135. N-linked (GlcNAc...) asparagine glycosylation is found at Asn-144 and Asn-193. 2 cysteine pairs are disulfide-bonded: Cys-202–Cys-215 and Cys-225–Cys-250. Catalysis depends on Ser-229, which acts as the Charge relay system.

Belongs to the peptidase S1 family. Expressed in larval carcasses and gut, and adult gut.

The protein localises to the secreted. Its subcellular location is the extracellular space. It catalyses the reaction Preferential cleavage: Tyr-|-Xaa, Trp-|-Xaa, Phe-|-Xaa, Leu-|-Xaa.. Serine protease with chymotryptic and collagenolytic activities. This is Chymotrypsin from Phaedon cochleariae (Mustard beetle).